Reading from the N-terminus, the 360-residue chain is Phosphoserine aminotransferase (360 aa).

Arg41 contributes to the L-glutamate binding site. Residues Trp101, Thr152, Asp172, and Gln195 each coordinate pyridoxal 5'-phosphate. Position 196 is an N6-(pyridoxal phosphate)lysine (Lys196). 237–238 (NT) lines the pyridoxal 5'-phosphate pocket.

Belongs to the class-V pyridoxal-phosphate-dependent aminotransferase family. SerC subfamily. In terms of assembly, homodimer. The cofactor is pyridoxal 5'-phosphate.

It localises to the cytoplasm. It carries out the reaction O-phospho-L-serine + 2-oxoglutarate = 3-phosphooxypyruvate + L-glutamate. The catalysed reaction is 4-(phosphooxy)-L-threonine + 2-oxoglutarate = (R)-3-hydroxy-2-oxo-4-phosphooxybutanoate + L-glutamate. It participates in amino-acid biosynthesis; L-serine biosynthesis; L-serine from 3-phospho-D-glycerate: step 2/3. Its pathway is cofactor biosynthesis; pyridoxine 5'-phosphate biosynthesis; pyridoxine 5'-phosphate from D-erythrose 4-phosphate: step 3/5. In terms of biological role, catalyzes the reversible conversion of 3-phosphohydroxypyruvate to phosphoserine and of 3-hydroxy-2-oxo-4-phosphonooxybutanoate to phosphohydroxythreonine. The polypeptide is Phosphoserine aminotransferase (Burkholderia ambifaria (strain MC40-6)).